The sequence spans 293 residues: Elongation factor Ts (293 aa).

The involved in Mg(2+) ion dislocation from EF-Tu stretch occupies residues 80–83 (TDFV).

It belongs to the EF-Ts family.

It is found in the cytoplasm. Functionally, associates with the EF-Tu.GDP complex and induces the exchange of GDP to GTP. It remains bound to the aminoacyl-tRNA.EF-Tu.GTP complex up to the GTP hydrolysis stage on the ribosome. This is Elongation factor Ts from Burkholderia thailandensis (strain ATCC 700388 / DSM 13276 / CCUG 48851 / CIP 106301 / E264).